Consider the following 511-residue polypeptide: Protoheme IX farnesyltransferase, mitochondrial (511 aa).

The transit peptide at 1–23 (MSSSTESLPGTLRRTLTTSRAPA) directs the protein to the mitochondrion. Disordered stretches follow at residues 1-27 (MSSS…ATSS) and 50-136 (HDSA…LAPD). Composition is skewed to low complexity over residues 52–79 (SASS…SSTT), 104–115 (RKAAAAAAAAAA), and 126–136 (PDAPTADLAPD). 8 helical membrane passes run 168-188 (LTVL…VPSF), 197-217 (SLAP…TTLC), 253-273 (AAVL…YFGV), 275-295 (PTVS…YTPL), 303-323 (TWVG…AAAG), 344-364 (LGGW…FMPL), 398-418 (AFIP…SFAV), and 444-464 (ARGL…LALA).

The protein belongs to the UbiA prenyltransferase family.

The protein resides in the mitochondrion membrane. Its function is as follows. Converts protoheme IX and farnesyl diphosphate to heme O. The chain is Protoheme IX farnesyltransferase, mitochondrial (pft-1) from Neurospora crassa (strain ATCC 24698 / 74-OR23-1A / CBS 708.71 / DSM 1257 / FGSC 987).